The sequence spans 130 residues: Small ribosomal subunit protein uS8 (130 aa).

The protein belongs to the universal ribosomal protein uS8 family. Part of the 30S ribosomal subunit.

In terms of biological role, one of the primary rRNA binding proteins, it binds directly to 16S rRNA central domain where it helps coordinate assembly of the platform of the 30S subunit. This Methanococcus maripaludis (strain C6 / ATCC BAA-1332) protein is Small ribosomal subunit protein uS8.